We begin with the raw amino-acid sequence, 228 residues long: 2,3-bisphosphoglycerate-dependent phosphoglycerate mutase (228 aa).

Residues 8-15 (RHGQSVWN), 21-22 (TG), arginine 60, 87-90 (ERHY), lysine 98, 114-115 (RR), and 183-184 (GN) each bind substrate. The Tele-phosphohistidine intermediate role is filled by histidine 9. Glutamate 87 serves as the catalytic Proton donor/acceptor.

The protein belongs to the phosphoglycerate mutase family. BPG-dependent PGAM subfamily.

The enzyme catalyses (2R)-2-phosphoglycerate = (2R)-3-phosphoglycerate. Its pathway is carbohydrate degradation; glycolysis; pyruvate from D-glyceraldehyde 3-phosphate: step 3/5. Functionally, catalyzes the interconversion of 2-phosphoglycerate and 3-phosphoglycerate. This Staphylococcus saprophyticus subsp. saprophyticus (strain ATCC 15305 / DSM 20229 / NCIMB 8711 / NCTC 7292 / S-41) protein is 2,3-bisphosphoglycerate-dependent phosphoglycerate mutase.